The sequence spans 534 residues: Calcium uptake protein 1 homolog, mitochondrial (534 aa).

The N-terminal 32 residues, 1 to 32 (MLHCSFLRVIPIKNASKRLIIVRSLTSAPAKT), are a transit peptide targeting the mitochondrion. Residues 131 to 150 (PEASQKEEVTESNGEVEEVK) are disordered. 3 consecutive EF-hand domains span residues 271-306 (TSHA…IMSQ), 338-359 (KDGK…LQHD), and 466-501 (LSDH…RMRR). Residues D284, D286, N288, and E295 each contribute to the Ca(2+) site.

Belongs to the MICU1 family. MICU1 subfamily. As to expression, expressed at low levels in PLM touch receptor neurons, germ cells, epidermis, and muscles.

The protein localises to the mitochondrion intermembrane space. The protein resides in the mitochondrion inner membrane. Calcium sensor of the mitochondrial calcium uniporter (mcu-1) channel, which senses calcium level via its EF-hand domains. At low calcium levels, micu-1 occludes the pore of the mcu-1 channel, preventing mitochondrial calcium uptake. At higher calcium levels, calcium-binding to micu-1 induces a conformational change that weakens mcu-1-micu-1 interactions and moves micu-1 away from the pore, allowing calcium permeation through the mcu-1 channel. Also required to protect against manganese toxicity by preventing manganese uptake by mcu-1. Modulates the activity of the mitochondrial calcium uniporter protein mcu-1 depending on the level of intracellular calcium in PLM touch receptor neurons following axonal injury. The chain is Calcium uptake protein 1 homolog, mitochondrial from Caenorhabditis elegans.